An 86-amino-acid chain; its full sequence is Cell division protein ZapA (86 aa).

It belongs to the ZapA family. Type 2 subfamily. Homodimer. Interacts with FtsZ.

The protein resides in the cytoplasm. Its function is as follows. Activator of cell division through the inhibition of FtsZ GTPase activity, therefore promoting FtsZ assembly into bundles of protofilaments necessary for the formation of the division Z ring. It is recruited early at mid-cell but it is not essential for cell division. This chain is Cell division protein ZapA, found in Oceanobacillus iheyensis (strain DSM 14371 / CIP 107618 / JCM 11309 / KCTC 3954 / HTE831).